We begin with the raw amino-acid sequence, 183 residues long: Der GTPase-activating protein YihI (183 aa).

The disordered stretch occupies residues methionine 1–lysine 101. Basic and acidic residues-rich tracts occupy residues lysine 22–glutamate 46 and lysine 92–lysine 101.

Belongs to the YihI family. In terms of assembly, interacts with Der.

Its function is as follows. A GTPase-activating protein (GAP) that modifies Der/EngA GTPase function. May play a role in ribosome biogenesis. In Shewanella oneidensis (strain ATCC 700550 / JCM 31522 / CIP 106686 / LMG 19005 / NCIMB 14063 / MR-1), this protein is Der GTPase-activating protein YihI.